The following is a 180-amino-acid chain: Translation initiation factor IF-3 (180 aa).

This sequence belongs to the IF-3 family. In terms of assembly, monomer.

It is found in the cytoplasm. Functionally, IF-3 binds to the 30S ribosomal subunit and shifts the equilibrium between 70S ribosomes and their 50S and 30S subunits in favor of the free subunits, thus enhancing the availability of 30S subunits on which protein synthesis initiation begins. The sequence is that of Translation initiation factor IF-3 from Hyphomonas neptunium (strain ATCC 15444).